Here is an 88-residue protein sequence, read N- to C-terminus: Small ribosomal subunit protein bS20 (88 aa).

This sequence belongs to the bacterial ribosomal protein bS20 family.

Functionally, binds directly to 16S ribosomal RNA. The sequence is that of Small ribosomal subunit protein bS20 from Clostridium novyi (strain NT).